A 216-amino-acid polypeptide reads, in one-letter code: Protein-L-isoaspartate O-methyltransferase (216 aa).

Residue Ser66 is part of the active site.

This sequence belongs to the methyltransferase superfamily. L-isoaspartyl/D-aspartyl protein methyltransferase family.

Its subcellular location is the cytoplasm. It catalyses the reaction [protein]-L-isoaspartate + S-adenosyl-L-methionine = [protein]-L-isoaspartate alpha-methyl ester + S-adenosyl-L-homocysteine. Catalyzes the methyl esterification of L-isoaspartyl residues in peptides and proteins that result from spontaneous decomposition of normal L-aspartyl and L-asparaginyl residues. It plays a role in the repair and/or degradation of damaged proteins. This is Protein-L-isoaspartate O-methyltransferase from Dechloromonas aromatica (strain RCB).